Here is a 353-residue protein sequence, read N- to C-terminus: Rhodopsin (353 aa).

Residues 1 to 36 (MNGTEGPYFYVPMVNTSGIVRSPYEYPQYYLVNPAA) lie on the Extracellular side of the membrane. Residues asparagine 2 and asparagine 15 are each glycosylated (N-linked (GlcNAc...) asparagine). A helical transmembrane segment spans residues 37–61 (YARLGAYMFLLILVGFPINFLTLYV). Residues 62–73 (TIEHKKLRTPLN) lie on the Cytoplasmic side of the membrane. The chain crosses the membrane as a helical span at residues 74–96 (YILLNLAVADLFMVFGGFTTTMY). Residues 97–110 (TSMHGYFVLGRLGC) lie on the Extracellular side of the membrane. Cysteine 110 and cysteine 187 are disulfide-bonded. A helical transmembrane segment spans residues 111-133 (NIEGFFATLGGEIALWSLVVLAI). Residues 134-136 (ERW) carry the 'Ionic lock' involved in activated form stabilization motif. At 134–152 (ERWVVVCKPISNFRFGENH) the chain is on the cytoplasmic side. A helical membrane pass occupies residues 153–173 (AIMGLAFTWLMALACAAPPLV). Residues 174 to 202 (GWSRYIPEGMQCSCGIDYYTRAEGFNNES) lie on the Extracellular side of the membrane. Residue asparagine 200 is glycosylated (N-linked (GlcNAc...) asparagine). A helical membrane pass occupies residues 203 to 224 (FVIYMFVCHFTVPLMVVFFCYG). Over 225-252 (RLLCAVKEAAAAQQESETTQRAEREVTR) the chain is Cytoplasmic. The chain crosses the membrane as a helical span at residues 253-274 (MVIMMVVAFLVCWLPYASVAWW). At 275-286 (IFTHQGSEFGPV) the chain is on the extracellular side. Residues 287 to 308 (FMTIPAFFAKSSSIYNPMIYIC) traverse the membrane as a helical segment. N6-(retinylidene)lysine is present on lysine 296. Residues 309-353 (LNKQFRHCMITTLCCGKNPFEEEEGASTASKTEASSVSSSSVSPA) are Cytoplasmic-facing. S-palmitoyl cysteine attachment occurs at residues cysteine 322 and cysteine 323. Positions 331-353 (EEGASTASKTEASSVSSSSVSPA) are disordered. Residues 334 to 353 (ASTASKTEASSVSSSSVSPA) are compositionally biased toward low complexity.

The protein belongs to the G-protein coupled receptor 1 family. Opsin subfamily. Phosphorylated on some or all of the serine and threonine residues present in the C-terminal region. Post-translationally, contains one covalently linked retinal chromophore.

It localises to the membrane. The protein localises to the cell projection. Its subcellular location is the cilium. The protein resides in the photoreceptor outer segment. Its function is as follows. Photoreceptor required for image-forming vision at low light intensity. While most salt water fish species use retinal as chromophore, most freshwater fish use 3-dehydroretinal, or a mixture of retinal and 3-dehydroretinal. Light-induced isomerization of 11-cis to all-trans retinal triggers a conformational change that activates signaling via G-proteins. Subsequent receptor phosphorylation mediates displacement of the bound G-protein alpha subunit by arrestin and terminates signaling. The sequence is that of Rhodopsin (rho) from Sarpa salpa (Salema).